We begin with the raw amino-acid sequence, 323 residues long: Glyoxylate/hydroxypyruvate reductase B (323 aa).

Catalysis depends on residues arginine 237 and glutamate 266. Residue histidine 285 is the Proton donor of the active site.

Belongs to the D-isomer specific 2-hydroxyacid dehydrogenase family. GhrB subfamily. As to quaternary structure, homodimer.

The protein resides in the cytoplasm. The catalysed reaction is glycolate + NADP(+) = glyoxylate + NADPH + H(+). It catalyses the reaction (R)-glycerate + NAD(+) = 3-hydroxypyruvate + NADH + H(+). It carries out the reaction (R)-glycerate + NADP(+) = 3-hydroxypyruvate + NADPH + H(+). Its function is as follows. Catalyzes the NADPH-dependent reduction of glyoxylate and hydroxypyruvate into glycolate and glycerate, respectively. This Klebsiella pneumoniae subsp. pneumoniae (strain ATCC 700721 / MGH 78578) protein is Glyoxylate/hydroxypyruvate reductase B.